A 340-amino-acid chain; its full sequence is Thylakoidal processing peptidase 1, chloroplastic (340 aa).

The N-terminal 52 residues, 1 to 52, are a transit peptide targeting the chloroplast; that stretch reads MAIRITFTYSTHVARNLVGTRVGPGGYCFESLVRPRFFSHKRDFDRSPRNRP. The chain crosses the membrane as a helical span at residues 155–175; sequence EDAKAAFTAVTVSILFRSALA. Residues 176–340 lie on the Lumenal, thylakoid side of the membrane; it reads EPKSIPSTSM…AITRGPVAVS (165 aa). Residue Ser184 is part of the active site.

It belongs to the peptidase S26 family.

The protein localises to the plastid. It is found in the chloroplast thylakoid membrane. The catalysed reaction is Cleavage of hydrophobic, N-terminal signal or leader sequences from secreted and periplasmic proteins.. Its function is as follows. Cleaves the thylakoid-transfer domain from a chloroplast protein. The protein is Thylakoidal processing peptidase 1, chloroplastic (TPP1) of Arabidopsis thaliana (Mouse-ear cress).